The primary structure comprises 144 residues: Bacilliredoxin BLi02323/BL05224 (144 aa).

It belongs to the bacilliredoxin family.

In Bacillus licheniformis (strain ATCC 14580 / DSM 13 / JCM 2505 / CCUG 7422 / NBRC 12200 / NCIMB 9375 / NCTC 10341 / NRRL NRS-1264 / Gibson 46), this protein is Bacilliredoxin BLi02323/BL05224.